A 221-amino-acid chain; its full sequence is Cyclin-U3-1 (221 aa).

This sequence belongs to the cyclin family. Cyclin U/P subfamily. Interacts with CDKA-1 and CDKB1-1. In terms of tissue distribution, expressed in roots, stems and flowers. Expressed in the shoot apex, leaf primordia and young leaves.

The chain is Cyclin-U3-1 (CYCU3-1) from Arabidopsis thaliana (Mouse-ear cress).